The chain runs to 148 residues: Cell division protein SepF (148 aa).

Positions 1–59 (MNNKFKDFFGFGDNDSYEERDAYEEHYDEQEEMQNSNRPTNSRDSNVVSIKAGQAGSGP) are disordered. Over residues 33–48 (MQNSNRPTNSRDSNVV) the composition is skewed to polar residues.

It belongs to the SepF family. In terms of assembly, homodimer. Interacts with FtsZ.

It is found in the cytoplasm. In terms of biological role, cell division protein that is part of the divisome complex and is recruited early to the Z-ring. Probably stimulates Z-ring formation, perhaps through the cross-linking of FtsZ protofilaments. Its function overlaps with FtsA. This chain is Cell division protein SepF, found in Lactobacillus delbrueckii subsp. bulgaricus (strain ATCC BAA-365 / Lb-18).